The following is a 351-amino-acid chain: Phenylacetaldoxime dehydratase (351 aa).

This sequence belongs to the heme-containing dehydratase family. Monomer. It depends on heme b as a cofactor.

It catalyses the reaction (Z)-phenylacetaldehyde oxime = phenylacetonitrile + H2O. Functionally, catalyzes the stoichiometric dehydration of Z-phenylacetaldoxime to phenylacetonitrile. Prefers the Z-form of phenylacetaldoxime over its E-isomer. In Bacillus sp. (strain OxB-1), this protein is Phenylacetaldoxime dehydratase.